Consider the following 446-residue polypeptide: Cytochrome P450 monooxygenase ptmP (446 aa).

A helical transmembrane segment spans residues valine 19–proline 39. Cysteine 385 contributes to the heme binding site. N-linked (GlcNAc...) asparagine glycosylation occurs at asparagine 430.

This sequence belongs to the cytochrome P450 family. Requires heme as cofactor.

Its subcellular location is the membrane. Its pathway is secondary metabolite biosynthesis. Cytochrome P450 monooxygenase; part of the gene cluster that mediates the biosynthesis of the indole diterpenes penitrems. The geranylgeranyl diphosphate (GGPP) synthase ptmG catalyzes the first step in penitrem biosynthesis via conversion of farnesyl pyrophosphate and isopentyl pyrophosphate into geranylgeranyl pyrophosphate (GGPP). Condensation of indole-3-glycerol phosphate with GGPP by the prenyl transferase ptmC then forms 3-geranylgeranylindole (3-GGI). Epoxidation by the FAD-dependent monooxygenase ptmM leads to a epoxidized-GGI that is substrate of the terpene cyclase ptmB for cyclization to yield paspaline. Paspaline is subsequently converted to 13-desoxypaxilline by the cytochrome P450 monooxygenase ptmP, the latter being then converted to paxilline by the cytochrome P450 monooxygenase ptmQ. Paxilline is converted to beta-paxitriol via C-10 ketoreduction by the short-chain dehydrogenase ptmH which can be monoprenylated at the C-20 by the indole diterpene prenyltransferase ptmD. A two-step elimination (acetylation and elimination) process performed by the O-acetyltransferase ptmV and ptmI leads to the production of the prenylated form of penijanthine. The FAD-linked oxidoreductase ptmO then converts the prenylated form of penijanthine into PC-M5 which is in turn transformed into PC-M4 by the aromatic dimethylallyltransferase ptmE. Five sequential oxidative transformations performed by the cytochrome P450 monooxygenases ptmK, ptmU, ptmL, ptmN and ptmJ yield the various penitrem compounds. PtmK, ptmU and ptmM are involved in the formation of the key bicyclic ring of penitrem C via the formation of the intermediates secopenitrem D and penitrem D. PtmL catalyzes the epoxidation of penitrem D and C to yield penitrem B and F, respectively. PtmJ catalyzes the last benzylic hydroxylation to convert penitrem B to prenitrem E and penitrem F to penitrem A. The sequence is that of Cytochrome P450 monooxygenase ptmP from Penicillium ochrochloron.